The primary structure comprises 339 residues: Tetraacyldisaccharide 4'-kinase (339 aa).

58–65 lines the ATP pocket; the sequence is TVGGSGKT.

It belongs to the LpxK family.

It catalyses the reaction a lipid A disaccharide + ATP = a lipid IVA + ADP + H(+). It participates in glycolipid biosynthesis; lipid IV(A) biosynthesis; lipid IV(A) from (3R)-3-hydroxytetradecanoyl-[acyl-carrier-protein] and UDP-N-acetyl-alpha-D-glucosamine: step 6/6. Transfers the gamma-phosphate of ATP to the 4'-position of a tetraacyldisaccharide 1-phosphate intermediate (termed DS-1-P) to form tetraacyldisaccharide 1,4'-bis-phosphate (lipid IVA). This is Tetraacyldisaccharide 4'-kinase from Shewanella baltica (strain OS155 / ATCC BAA-1091).